Consider the following 381-residue polypeptide: Arf-GAP with dual PH domain-containing protein 2 (381 aa).

The Arf-GAP domain maps to 9–132 (KRLLELLQAA…TAIDKAVSHP (124 aa)). The C4-type zinc finger occupies 25 to 48 (CADCGAADPDWASYKLGIFICLHC). PH domains are found at residues 132–233 (PGNR…AARL) and 255–361 (NYLK…GVLS).

It localises to the cytoplasm. Its subcellular location is the cell membrane. GTPase-activating protein for the ADP ribosylation factor family (Potential). Binds phosphatidylinositol 3,4,5-trisphosphate (PtdInsP3) and inositol 1,3,4,5-tetrakisphosphate (InsP4). Possesses a stoichiometry of two binding sites for InsP4 with identical affinity. This chain is Arf-GAP with dual PH domain-containing protein 2 (Adap2), found in Mus musculus (Mouse).